We begin with the raw amino-acid sequence, 542 residues long: MTRYVFITGGVVSSLGKGLASAALAALLQARGYRVRLRKLDPYLNVDPGTMSPTQHGEVFVTDDGAETDLDLGHYERFTGVPATRADNITTGRIYLDIITKERRGDYLGATIQVIPHVTNAIKEFVLDGNEGYDFVLVEIGGTVGDIEGLPFFEAIRQLGQELPRGQCAYIHLTLLPYIPSAGELKTKPTQHSVAELRSIGIQPDILLCRCDRPIPREERRKLAQFCNVRESAVIEARDVASIYDVPLSYGEEGLDREVLALFGIEATSEPKLDRWRTISERVKNPEGEVSIAIVGKYTGLKDAYKSLIEALTHGGIANRVKVNLEWIEAEIFEREDPAPFLEGLNGILVPGGFGQRGAEGKIRAARYAREKKIPYFGICFGMQMAVVEAARSLAGIPEANSTEFGPTPEPVVGLLTEWMRGNELERRVAEGDLGGTMRLGSYTAKLAPDSRIAEIYGGTAIAERHRHRYEVNMAYRERLEARGMRFSGLSPDGLLPETVEVEGHPWFIGVQFHPELKSRPFEPHPLFKSFIGAAVVQSRLV.

Residues 1–265 form an amidoligase domain region; that stretch reads MTRYVFITGG…DREVLALFGI (265 aa). Serine 13 lines the CTP pocket. Serine 13 is a binding site for UTP. ATP contacts are provided by residues 14 to 19 and aspartate 71; that span reads SLGKGL. Mg(2+)-binding residues include aspartate 71 and glutamate 139. CTP-binding positions include 146 to 148, 186 to 191, and lysine 222; these read DIE and KTKPTQ. Residues 186-191 and lysine 222 contribute to the UTP site; that span reads KTKPTQ. 238–240 contacts ATP; the sequence is RDV. The Glutamine amidotransferase type-1 domain maps to 291–541; the sequence is SIAIVGKYTG…IGAAVVQSRL (251 aa). L-glutamine is bound at residue glycine 353. Cysteine 380 functions as the Nucleophile; for glutamine hydrolysis in the catalytic mechanism. L-glutamine is bound by residues 381–384, glutamate 404, and arginine 469; that span reads FGMQ. Catalysis depends on residues histidine 514 and glutamate 516.

The protein belongs to the CTP synthase family. In terms of assembly, homotetramer.

It catalyses the reaction UTP + L-glutamine + ATP + H2O = CTP + L-glutamate + ADP + phosphate + 2 H(+). The catalysed reaction is L-glutamine + H2O = L-glutamate + NH4(+). The enzyme catalyses UTP + NH4(+) + ATP = CTP + ADP + phosphate + 2 H(+). Its pathway is pyrimidine metabolism; CTP biosynthesis via de novo pathway; CTP from UDP: step 2/2. With respect to regulation, allosterically activated by GTP, when glutamine is the substrate; GTP has no effect on the reaction when ammonia is the substrate. The allosteric effector GTP functions by stabilizing the protein conformation that binds the tetrahedral intermediate(s) formed during glutamine hydrolysis. Inhibited by the product CTP, via allosteric rather than competitive inhibition. In terms of biological role, catalyzes the ATP-dependent amination of UTP to CTP with either L-glutamine or ammonia as the source of nitrogen. Regulates intracellular CTP levels through interactions with the four ribonucleotide triphosphates. This chain is CTP synthase, found in Methylobacterium nodulans (strain LMG 21967 / CNCM I-2342 / ORS 2060).